Consider the following 883-residue polypeptide: Phosphoenolpyruvate carboxylase (883 aa).

Residues His-138 and Lys-546 contribute to the active site.

This sequence belongs to the PEPCase type 1 family. Mg(2+) is required as a cofactor.

The enzyme catalyses oxaloacetate + phosphate = phosphoenolpyruvate + hydrogencarbonate. Its function is as follows. Forms oxaloacetate, a four-carbon dicarboxylic acid source for the tricarboxylic acid cycle. This chain is Phosphoenolpyruvate carboxylase, found in Enterobacter sp. (strain 638).